Reading from the N-terminus, the 289-residue chain is Elongation factor Ts (289 aa).

Residues 82-85 form an involved in Mg(2+) ion dislocation from EF-Tu region; that stretch reads TDFV.

This sequence belongs to the EF-Ts family.

The protein localises to the cytoplasm. Associates with the EF-Tu.GDP complex and induces the exchange of GDP to GTP. It remains bound to the aminoacyl-tRNA.EF-Tu.GTP complex up to the GTP hydrolysis stage on the ribosome. This is Elongation factor Ts from Chloroherpeton thalassium (strain ATCC 35110 / GB-78).